Reading from the N-terminus, the 1299-residue chain is Outer capsid protein VP1 (1299 aa).

Belongs to the aquareoviridae outer capsid VP1 protein family.

The protein localises to the virion. It catalyses the reaction a 5'-end diphospho-ribonucleoside in mRNA + GTP + H(+) = a 5'-end (5'-triphosphoguanosine)-ribonucleoside in mRNA + diphosphate. The enzyme catalyses a 5'-end (5'-triphosphoguanosine)-ribonucleoside in mRNA + S-adenosyl-L-methionine = a 5'-end (N(7)-methyl 5'-triphosphoguanosine)-ribonucleoside in mRNA + S-adenosyl-L-homocysteine. Its function is as follows. Outer capsid protein involved in mRNA capping. Catalyzes the last 3 enzymatic activities for formation of the 5' cap structure on the viral plus-strand transcripts, namely the RNA guanylyltransferase, RNA-7N- and RNA-2'O-methyltransferase activities. In Aquareovirus C (isolate Golden shiner/USA/GSRV/1977) (AQRV-C), this protein is Outer capsid protein VP1 (S1).